A 397-amino-acid polypeptide reads, in one-letter code: Nickel-cobalt-cadmium resistance protein NccB (397 aa).

Residues 10 to 30 form a helical membrane-spanning segment; the sequence is PSWPMIAGVAAAAALVGFGAA. Residues 137-195 adopt a coiled-coil conformation; it reads EAAAMAAERKVAQARADLARKTYERESSLFQQGVTPRQEMESARIALDVAQAEVQRAAT.

It belongs to the membrane fusion protein (MFP) (TC 8.A.1) family.

Its subcellular location is the cell inner membrane. In terms of biological role, component of the NCC cation efflux system that confers resistance to nickel, cobalt and cadmium. This chain is Nickel-cobalt-cadmium resistance protein NccB (nccB), found in Alcaligenes xylosoxydans xylosoxydans (Achromobacter xylosoxidans).